Consider the following 136-residue polypeptide: Protein PsiE (136 aa).

The next 4 membrane-spanning stretches (helical) occupy residues 15 to 35 (ILQN…VVFL), 55 to 75 (YELV…ALIV), 83 to 103 (HFPL…LIIV), and 108 to 128 (PMDV…LWLC).

This sequence belongs to the PsiE family.

Its subcellular location is the cell inner membrane. This is Protein PsiE from Salmonella agona (strain SL483).